The primary structure comprises 277 residues: Large ribosomal subunit protein uL2 (277 aa).

The interval 222–277 (GVAMNPVDHPHGGGEGRTSGGRHPVSPWGKPTKGKRTRSNKATDKFIMRTRHQRKK) is disordered.

It belongs to the universal ribosomal protein uL2 family. As to quaternary structure, part of the 50S ribosomal subunit. Forms a bridge to the 30S subunit in the 70S ribosome.

Functionally, one of the primary rRNA binding proteins. Required for association of the 30S and 50S subunits to form the 70S ribosome, for tRNA binding and peptide bond formation. It has been suggested to have peptidyltransferase activity; this is somewhat controversial. Makes several contacts with the 16S rRNA in the 70S ribosome. The protein is Large ribosomal subunit protein uL2 of Bartonella tribocorum (strain CIP 105476 / IBS 506).